The following is a 353-amino-acid chain: tRNA-specific 2-thiouridylase MnmA 2 (353 aa).

Residues 9–16 and M35 each bind ATP; that span reads AMSGGVDS. C98 serves as the catalytic Nucleophile. C98 and C194 are joined by a disulfide. G122 is an ATP binding site. An interaction with tRNA region spans residues 144 to 146; it reads KDQ. The active-site Cysteine persulfide intermediate is C194. An interaction with tRNA region spans residues 300–301; the sequence is RY.

It belongs to the MnmA/TRMU family.

The protein localises to the cytoplasm. It catalyses the reaction S-sulfanyl-L-cysteinyl-[protein] + uridine(34) in tRNA + AH2 + ATP = 2-thiouridine(34) in tRNA + L-cysteinyl-[protein] + A + AMP + diphosphate + H(+). In terms of biological role, catalyzes the 2-thiolation of uridine at the wobble position (U34) of tRNA, leading to the formation of s(2)U34. This chain is tRNA-specific 2-thiouridylase MnmA 2, found in Clostridium botulinum (strain Loch Maree / Type A3).